Consider the following 93-residue polypeptide: Aspartyl/glutamyl-tRNA(Asn/Gln) amidotransferase subunit C (93 aa).

It belongs to the GatC family. Heterotrimer of A, B and C subunits.

It catalyses the reaction L-glutamyl-tRNA(Gln) + L-glutamine + ATP + H2O = L-glutaminyl-tRNA(Gln) + L-glutamate + ADP + phosphate + H(+). The catalysed reaction is L-aspartyl-tRNA(Asn) + L-glutamine + ATP + H2O = L-asparaginyl-tRNA(Asn) + L-glutamate + ADP + phosphate + 2 H(+). Allows the formation of correctly charged Asn-tRNA(Asn) or Gln-tRNA(Gln) through the transamidation of misacylated Asp-tRNA(Asn) or Glu-tRNA(Gln) in organisms which lack either or both of asparaginyl-tRNA or glutaminyl-tRNA synthetases. The reaction takes place in the presence of glutamine and ATP through an activated phospho-Asp-tRNA(Asn) or phospho-Glu-tRNA(Gln). In Methanothrix thermoacetophila (strain DSM 6194 / JCM 14653 / NBRC 101360 / PT) (Methanosaeta thermophila), this protein is Aspartyl/glutamyl-tRNA(Asn/Gln) amidotransferase subunit C.